The chain runs to 510 residues: GMP synthase [glutamine-hydrolyzing] (510 aa).

One can recognise a Glutamine amidotransferase type-1 domain in the interval 5–195; it reads LVFIIDFGGQ…LFNICELKGD (191 aa). The active-site Nucleophile is the Cys82. Residues His169 and Glu171 contribute to the active site. One can recognise a GMPS ATP-PPase domain in the interval 196-385; the sequence is WSVTSFAEEK…LGIPHKLVWR (190 aa). ATP is bound at residue 223 to 229; that stretch reads SGGVDSS.

As to quaternary structure, homodimer.

It catalyses the reaction XMP + L-glutamine + ATP + H2O = GMP + L-glutamate + AMP + diphosphate + 2 H(+). It functions in the pathway purine metabolism; GMP biosynthesis; GMP from XMP (L-Gln route): step 1/1. Functionally, catalyzes the synthesis of GMP from XMP. This chain is GMP synthase [glutamine-hydrolyzing], found in Clostridium tetani (strain Massachusetts / E88).